The sequence spans 160 residues: Probable chemoreceptor glutamine deamidase CheD 1 (160 aa).

It belongs to the CheD family.

The catalysed reaction is L-glutaminyl-[protein] + H2O = L-glutamyl-[protein] + NH4(+). Functionally, probably deamidates glutamine residues to glutamate on methyl-accepting chemotaxis receptors (MCPs), playing an important role in chemotaxis. The polypeptide is Probable chemoreceptor glutamine deamidase CheD 1 (Syntrophus aciditrophicus (strain SB)).